The sequence spans 258 residues: GTP cyclohydrolase FolE2 (258 aa).

This sequence belongs to the GTP cyclohydrolase IV family.

It carries out the reaction GTP + H2O = 7,8-dihydroneopterin 3'-triphosphate + formate + H(+). It functions in the pathway cofactor biosynthesis; 7,8-dihydroneopterin triphosphate biosynthesis; 7,8-dihydroneopterin triphosphate from GTP: step 1/1. In terms of biological role, converts GTP to 7,8-dihydroneopterin triphosphate. In Geobacter sulfurreducens (strain ATCC 51573 / DSM 12127 / PCA), this protein is GTP cyclohydrolase FolE2.